We begin with the raw amino-acid sequence, 154 residues long: Probable ubiquitin-conjugating enzyme E2 31 (154 aa).

A UBC core domain is found at 8–153; sequence KAAQRIAMEY…AREFTARHAN (146 aa). The active-site Glycyl thioester intermediate is the Cys91.

Belongs to the ubiquitin-conjugating enzyme family.

The enzyme catalyses S-ubiquitinyl-[E1 ubiquitin-activating enzyme]-L-cysteine + [E2 ubiquitin-conjugating enzyme]-L-cysteine = [E1 ubiquitin-activating enzyme]-L-cysteine + S-ubiquitinyl-[E2 ubiquitin-conjugating enzyme]-L-cysteine.. It participates in protein modification; protein ubiquitination. In terms of biological role, accepts the ubiquitin from the E1 complex and catalyzes its covalent attachment to other proteins. The sequence is that of Probable ubiquitin-conjugating enzyme E2 31 (UBC31) from Arabidopsis thaliana (Mouse-ear cress).